A 63-amino-acid polypeptide reads, in one-letter code: Large ribosomal subunit protein bL28 (63 aa).

This sequence belongs to the bacterial ribosomal protein bL28 family.

The protein is Large ribosomal subunit protein bL28 of Clostridium perfringens (strain ATCC 13124 / DSM 756 / JCM 1290 / NCIMB 6125 / NCTC 8237 / Type A).